We begin with the raw amino-acid sequence, 181 residues long: Adenine phosphoribosyltransferase (181 aa).

Belongs to the purine/pyrimidine phosphoribosyltransferase family. In terms of assembly, homodimer.

It localises to the cytoplasm. The catalysed reaction is AMP + diphosphate = 5-phospho-alpha-D-ribose 1-diphosphate + adenine. It functions in the pathway purine metabolism; AMP biosynthesis via salvage pathway; AMP from adenine: step 1/1. Functionally, catalyzes a salvage reaction resulting in the formation of AMP, that is energically less costly than de novo synthesis. This Shewanella loihica (strain ATCC BAA-1088 / PV-4) protein is Adenine phosphoribosyltransferase.